Consider the following 182-residue polypeptide: uncharacterized protein (182 aa).

It belongs to the mimivirus L6/L7/L57 family.

This is an uncharacterized protein from Acanthamoeba polyphaga mimivirus (APMV).